The primary structure comprises 323 residues: tRNA U34 carboxymethyltransferase (323 aa).

Carboxy-S-adenosyl-L-methionine is bound by residues lysine 91, tryptophan 105, lysine 110, glycine 130, 152–154, 181–182, methionine 196, tyrosine 200, and arginine 315; these read DPT and IE.

The protein belongs to the class I-like SAM-binding methyltransferase superfamily. CmoB family. In terms of assembly, homotetramer.

The catalysed reaction is carboxy-S-adenosyl-L-methionine + 5-hydroxyuridine(34) in tRNA = 5-carboxymethoxyuridine(34) in tRNA + S-adenosyl-L-homocysteine + H(+). In terms of biological role, catalyzes carboxymethyl transfer from carboxy-S-adenosyl-L-methionine (Cx-SAM) to 5-hydroxyuridine (ho5U) to form 5-carboxymethoxyuridine (cmo5U) at position 34 in tRNAs. In Salmonella paratyphi B (strain ATCC BAA-1250 / SPB7), this protein is tRNA U34 carboxymethyltransferase.